The primary structure comprises 239 residues: Ribonuclease PH (239 aa).

Residues R86 and 124–126 (GTR) each bind phosphate.

This sequence belongs to the RNase PH family. In terms of assembly, homohexameric ring arranged as a trimer of dimers.

It carries out the reaction tRNA(n+1) + phosphate = tRNA(n) + a ribonucleoside 5'-diphosphate. In terms of biological role, phosphorolytic 3'-5' exoribonuclease that plays an important role in tRNA 3'-end maturation. Removes nucleotide residues following the 3'-CCA terminus of tRNAs; can also add nucleotides to the ends of RNA molecules by using nucleoside diphosphates as substrates, but this may not be physiologically important. Probably plays a role in initiation of 16S rRNA degradation (leading to ribosome degradation) during starvation. The sequence is that of Ribonuclease PH from Sinorhizobium fredii (strain NBRC 101917 / NGR234).